The following is a 425-amino-acid chain: Serine--tRNA ligase (425 aa).

An L-serine-binding site is contributed by Thr-233–Glu-235. Residue Arg-264–Glu-266 participates in ATP binding. Position 287 (Glu-287) interacts with L-serine. Glu-351–Ser-354 serves as a coordination point for ATP. Ser-387 provides a ligand contact to L-serine.

This sequence belongs to the class-II aminoacyl-tRNA synthetase family. Type-1 seryl-tRNA synthetase subfamily. In terms of assembly, homodimer. The tRNA molecule binds across the dimer.

It is found in the cytoplasm. It carries out the reaction tRNA(Ser) + L-serine + ATP = L-seryl-tRNA(Ser) + AMP + diphosphate + H(+). It catalyses the reaction tRNA(Sec) + L-serine + ATP = L-seryl-tRNA(Sec) + AMP + diphosphate + H(+). It participates in aminoacyl-tRNA biosynthesis; selenocysteinyl-tRNA(Sec) biosynthesis; L-seryl-tRNA(Sec) from L-serine and tRNA(Sec): step 1/1. Its function is as follows. Catalyzes the attachment of serine to tRNA(Ser). Is also able to aminoacylate tRNA(Sec) with serine, to form the misacylated tRNA L-seryl-tRNA(Sec), which will be further converted into selenocysteinyl-tRNA(Sec). The chain is Serine--tRNA ligase from Thermotoga sp. (strain RQ2).